The sequence spans 165 residues: GPI-anchored protein LORELEI (165 aa).

A signal peptide spans 1–20 (MELILLFFFLMALLVSLSSS). The tract at residues 82 to 93 (PYVSQINDMNSD) is required for its function in pollen tube reception. Asparagine 137 is a glycosylation site (N-linked (GlcNAc...) asparagine). The GPI-anchor amidated serine moiety is linked to residue serine 139. Positions 140–165 (TADSTPRFISLLISAATAVFALLVLT) are cleaved as a propeptide — removed in mature form.

As to quaternary structure, interacts with FER. As to expression, expressed in leaves, buds, flowers and stems. Highest expression in the synergid cells of the female gametophyte.

It is found in the cell membrane. Female gametophyte-specific component of the signaling pathway required for fertilization. Required for reception of the pollen tube by the female gametophyte. Acts specifically at the synergid cell surface for pollen tube reception. Plays a role in double fertilization and early seed development. Component of the FER-regulated Rho GTPase signaling complex. Acts as a chaperone and coreceptor for FER. Required for localization of FER to the plasma membrane. This chain is GPI-anchored protein LORELEI (LRE), found in Arabidopsis thaliana (Mouse-ear cress).